The following is a 287-amino-acid chain: Nucleotide-binding protein Gbem_0872 (287 aa).

Glycine 8–serine 15 provides a ligand contact to ATP. GTP is bound at residue aspartate 59–serine 62.

Belongs to the RapZ-like family.

Its function is as follows. Displays ATPase and GTPase activities. This is Nucleotide-binding protein Gbem_0872 from Citrifermentans bemidjiense (strain ATCC BAA-1014 / DSM 16622 / JCM 12645 / Bem) (Geobacter bemidjiensis).